A 215-amino-acid chain; its full sequence is CASP-like protein 1E1 (215 aa).

Residues 1 to 51 (MESSRGKPGLNGSGGGAAAFDYSSRRGYYTGAGAALPPLAAGSRAPPVDPC) are Cytoplasmic-facing. The helical transmembrane segment at 52 to 72 (CVALRVFVLLGTLASAVVMAA) threads the bilayer. At 73-103 (DRQSTTVQIAAGEQLAPPLRVPVTAKWTYSS) the chain is on the extracellular side. Residues 104 to 124 (AFVYFVVANAMVFAFSAAALA) form a helical membrane-spanning segment. Topologically, residues 125–130 (AVRRRS) are cytoplasmic. Residues 131-151 (AVVPVMVGDLVAMALLFSAVG) traverse the membrane as a helical segment. Over 152–185 (AAAQFGLLGERGNAHVRWAKVCDVYGPFCERAMA) the chain is Extracellular. Residues 186-206 (AVVVALIAAFADLVLLMLTIL) traverse the membrane as a helical segment. Residues 207 to 215 (TIHKASSYY) lie on the Cytoplasmic side of the membrane.

The protein belongs to the Casparian strip membrane proteins (CASP) family. Homodimer and heterodimers.

The protein localises to the cell membrane. The protein is CASP-like protein 1E1 of Oryza sativa subsp. indica (Rice).